The following is a 441-amino-acid chain: Xaa-Pro dipeptidase (441 aa).

Residues aspartate 244, aspartate 255, histidine 336, glutamate 381, and glutamate 420 each coordinate Mn(2+).

It belongs to the peptidase M24B family. Bacterial-type prolidase subfamily. Mn(2+) is required as a cofactor.

It carries out the reaction Xaa-L-Pro dipeptide + H2O = an L-alpha-amino acid + L-proline. Its function is as follows. Splits dipeptides with a prolyl residue in the C-terminal position. The polypeptide is Xaa-Pro dipeptidase (Xanthomonas axonopodis pv. citri (strain 306)).